A 556-amino-acid polypeptide reads, in one-letter code: Probable zinc metalloprotease EGY2, chloroplastic (556 aa).

Residues 1–64 constitute a chloroplast transit peptide; that stretch reads MNLAVASFRG…VFRKRETLVR (64 aa). The segment at 63–133 is disordered; that stretch reads VRVTETQTEP…DGDKLEVSSG (71 aa). 7 consecutive transmembrane segments (helical) span residues 267–287, 311–331, 336–356, 374–394, 437–457, 484–504, and 527–547; these read AVPEWFAAGSFGLVALFTLFL, LPGALVTALVLGVHELGHILV, GIKLGVPFFVPSWQIGSFGAI, AAGPLAGFSLGLILFLIGLFV, PLVIWAWAGLLINGINSIPAG, LLGLSALFSDVAFYWVVLIFF, and LGILVLFLSLLVCLPYPFAFT.

Belongs to the peptidase M50B family.

It localises to the plastid. Its subcellular location is the chloroplast membrane. Functionally, probable membrane-associated metalloprotease that may be involved in chloroplast development. This chain is Probable zinc metalloprotease EGY2, chloroplastic (EGY2), found in Arabidopsis thaliana (Mouse-ear cress).